The primary structure comprises 760 residues: Microprocessor complex subunit DGCR8 (760 aa).

The disordered stretch occupies residues 1–71 (METCGSPSPL…PAEDPLNFYG (71 aa)). Positions 1 to 275 (METCGSPSPL…KYGGDSDHPS (275 aa)) are necessary for nuclear localization and retention. The necessary for interaction with NCL stretch occupies residues 1–342 (METCGSPSPL…YFLGTGSIRK (342 aa)). A phosphoserine mark is found at S35, S92, S95, S271, and S275. Positions 263–276 (MEEKYGGDSDHPSD) are enriched in basic and acidic residues. The disordered stretch occupies residues 263-284 (MEEKYGGDSDHPSDGETSVQPM). The segment at 276–738 (DGETSVQPMM…LAEEREETRK (463 aa)) is necessary for heme-binding and pri-miRNA processing. The residue at position 279 (T279) is a Phosphothreonine. One can recognise a WW domain in the interval 301–334 (EPLPDGWIMTFHNSGVPVYLHRESRVVTWSRPYF). Residue C352 participates in heme binding. Residues 361–405 (SEERERAAGIAPPEPELPPDEPDPLGTDAGPPDEKDPLGAEAAPG) form a disordered region. Residues K411 and K487 each participate in a glycyl lysine isopeptide (Lys-Gly) (interchain with G-Cter in SUMO2) cross-link. DRBM domains follow at residues 498–565 (SEVC…ILIP) and 606–673 (SPYQ…LLHP). The residue at position 664 (S664) is a Phosphoserine. Positions 688-760 (ESSKMVKQET…GGEPLCTVDV (73 aa)) are interaction with DROSHA. K694 is covalently cross-linked (Glycyl lysine isopeptide (Lys-Gly) (interchain with G-Cter in SUMO2)). The interval 731-760 (EEREETRKKPKMSIVASAQPGGEPLCTVDV) is disordered.

In terms of assembly, monomer; in absence of heme. Homodimer; the association with heme promotes its dimerization. Component of the microprocessor complex, or pri-miRNA processing protein complex, which is composed of DROSHA and DGCR8. The microprocessor complex is a heterotrimer; each of the two DROSHA RNase III domains binds one DGCR8 (via C-terminal region). Interacts with ILF3, NCL and DROSHA. Interacts with CPSF3 and ISY1; this interaction is in an RNA dependent manner. Interacts with PUS10; interaction promotes pri-miRNAs processing. It depends on heme as a cofactor. Post-translationally, phosphorylated at Ser-664 by ATM upon radiation, which is crucial for its stability. In terms of processing, ubiquitinated, leading to degradation in a proteasome-dependent manner. Deubiquitinated by USP51, leading to stabilization.

It localises to the nucleus. Its subcellular location is the nucleolus. Component of the microprocessor complex that acts as a RNA- and heme-binding protein that is involved in the initial step of microRNA (miRNA) biogenesis. Component of the microprocessor complex that is required to process primary miRNA transcripts (pri-miRNAs) to release precursor miRNA (pre-miRNA) in the nucleus. Within the microprocessor complex, DGCR8 function as a molecular anchor necessary for the recognition of pri-miRNA at dsRNA-ssRNA junction and directs DROSHA to cleave 11 bp away form the junction to release hairpin-shaped pre-miRNAs that are subsequently cut by the cytoplasmic DICER to generate mature miRNAs. The heme-bound DGCR8 dimer binds pri-miRNAs as a cooperative trimer (of dimers) and is active in triggering pri-miRNA cleavage, whereas the heme-free DGCR8 monomer binds pri-miRNAs as a dimer and is much less active. Both double-stranded and single-stranded regions of a pri-miRNA are required for its binding. Specifically recognizes and binds N6-methyladenosine (m6A)-containing pri-miRNAs, a modification required for pri-miRNAs processing. Involved in the silencing of embryonic stem cell self-renewal. Plays also a role in DNA repair by promoting the recruitment of RNF168 to RNF8 and MDC1 at DNA double-strand breaks and subsequently the clearance of DNA breaks. The protein is Microprocessor complex subunit DGCR8 (DGCR8) of Bos taurus (Bovine).